The primary structure comprises 921 residues: Isoleucine--tRNA ligase (921 aa).

The 'HIGH' region motif lies at proline 57–histidine 67. Glutamate 552 contacts L-isoleucyl-5'-AMP. The short motif at lysine 593–serine 597 is the 'KMSKS' region element. Lysine 596 is an ATP binding site. Zn(2+) is bound by residues cysteine 888, cysteine 891, cysteine 908, and cysteine 911.

It belongs to the class-I aminoacyl-tRNA synthetase family. IleS type 1 subfamily. As to quaternary structure, monomer. Zn(2+) serves as cofactor.

The protein localises to the cytoplasm. It catalyses the reaction tRNA(Ile) + L-isoleucine + ATP = L-isoleucyl-tRNA(Ile) + AMP + diphosphate. Catalyzes the attachment of isoleucine to tRNA(Ile). As IleRS can inadvertently accommodate and process structurally similar amino acids such as valine, to avoid such errors it has two additional distinct tRNA(Ile)-dependent editing activities. One activity is designated as 'pretransfer' editing and involves the hydrolysis of activated Val-AMP. The other activity is designated 'posttransfer' editing and involves deacylation of mischarged Val-tRNA(Ile). The polypeptide is Isoleucine--tRNA ligase (Bacillus cereus (strain 03BB102)).